Consider the following 913-residue polypeptide: Isoleucine--tRNA ligase (913 aa).

The short motif at 57–67 (PYANGDIHLGT) is the 'HIGH' region element. Glu549 lines the L-isoleucyl-5'-AMP pocket. A 'KMSKS' region motif is present at residues 590 to 594 (KMSKS). Residue Lys593 participates in ATP binding. Residues Cys881, Cys884, Cys901, and Cys904 each contribute to the Zn(2+) site.

It belongs to the class-I aminoacyl-tRNA synthetase family. IleS type 1 subfamily. Monomer. Zn(2+) serves as cofactor.

The protein localises to the cytoplasm. It carries out the reaction tRNA(Ile) + L-isoleucine + ATP = L-isoleucyl-tRNA(Ile) + AMP + diphosphate. In terms of biological role, catalyzes the attachment of isoleucine to tRNA(Ile). As IleRS can inadvertently accommodate and process structurally similar amino acids such as valine, to avoid such errors it has two additional distinct tRNA(Ile)-dependent editing activities. One activity is designated as 'pretransfer' editing and involves the hydrolysis of activated Val-AMP. The other activity is designated 'posttransfer' editing and involves deacylation of mischarged Val-tRNA(Ile). In Fervidobacterium nodosum (strain ATCC 35602 / DSM 5306 / Rt17-B1), this protein is Isoleucine--tRNA ligase.